The chain runs to 224 residues: MKILTQDEIEAHRSHTLKGGIEGALAGFAISAIIFKVLPRRYPKFKPSTLTWSIKTALWITPPTVLTAICAEEASNNFDATMYGSGSSSEDALDEHRRWKSLSTKDKFVEGLSNNKYKIITGAWAASLYGSWVIVNKDPIMTKAQKIVQARMYAQFITVGLLLASVGLSMYENKLHPNKQKVNEMRRWENALRVAEEEERLEKEGRRTGYVSNEERINSKIFKS.

At 1 to 13 (MKILTQDEIEAHR) the chain is on the mitochondrial intermembrane side. A helical membrane pass occupies residues 14–38 (SHTLKGGIEGALAGFAISAIIFKVL). Residues 39–47 (PRRYPKFKP) are Mitochondrial matrix-facing. A helical membrane pass occupies residues 48-75 (STLTWSIKTALWITPPTVLTAICAEEAS). At 76–103 (NNFDATMYGSGSSSEDALDEHRRWKSLS) the chain is on the mitochondrial intermembrane side. The HIG1 domain occupies 89 to 180 (SEDALDEHRR…YENKLHPNKQ (92 aa)). A helical membrane pass occupies residues 104–133 (TKDKFVEGLSNNKYKIITGAWAASLYGSWV). The Mitochondrial matrix portion of the chain corresponds to 134-142 (IVNKDPIMT). A helical transmembrane segment spans residues 143-173 (KAQKIVQARMYAQFITVGLLLASVGLSMYEN). The Mitochondrial intermembrane portion of the chain corresponds to 174-184 (KLHPNKQKVNE). The helical transmembrane segment at 185–204 (MRRWENALRVAEEEERLEKE) threads the bilayer. The Mitochondrial matrix portion of the chain corresponds to 205 to 224 (GRRTGYVSNEERINSKIFKS).

As to quaternary structure, associates with a subpopulation of the cytochrome bc1-cytochrome c oxidase supercomplexes. Associates in substoichiometric amounts with complex IV. Interacts with COX3.

Its subcellular location is the mitochondrion membrane. Its function is as follows. Assembly factor that plays a role in the assembly of the respiratory chain supercomplexes (SCs) composed of ubiquinol-cytochrome c oxidoreductase (cytochrome b-c1 complex, complex III, CIII) and cytochrome c oxidase (complex IV, CIV). May be required for late-stage assembly of the COX12 and COX13 subunits. Required for the generation and maintenance of a normal proton motive force (PMF) across the inner mitochondrial membrane (IMM) by preventing proton leakage through an inactive population of CIV that accumulates when RCF1 and/or RCF2 proteins are absent. This chain is Respiratory supercomplex factor 2, mitochondrial (RCF2), found in Saccharomyces cerevisiae (strain ATCC 204508 / S288c) (Baker's yeast).